The following is a 140-amino-acid chain: 3-hydroxyacyl-[acyl-carrier-protein] dehydratase FabZ (140 aa).

The active site involves His48.

Belongs to the thioester dehydratase family. FabZ subfamily.

The protein localises to the cytoplasm. It catalyses the reaction a (3R)-hydroxyacyl-[ACP] = a (2E)-enoyl-[ACP] + H2O. Its function is as follows. Involved in unsaturated fatty acids biosynthesis. Catalyzes the dehydration of short chain beta-hydroxyacyl-ACPs and long chain saturated and unsaturated beta-hydroxyacyl-ACPs. In Oceanobacillus iheyensis (strain DSM 14371 / CIP 107618 / JCM 11309 / KCTC 3954 / HTE831), this protein is 3-hydroxyacyl-[acyl-carrier-protein] dehydratase FabZ.